The following is a 410-amino-acid chain: 3-phosphoshikimate 1-carboxyvinyltransferase (410 aa).

Residues K20, S21, and R25 each contribute to the 3-phosphoshikimate site. Residue K20 coordinates phosphoenolpyruvate. Phosphoenolpyruvate contacts are provided by G87 and R115. 3-phosphoshikimate is bound by residues S157, S158, Q159, S183, D293, and K320. A phosphoenolpyruvate-binding site is contributed by Q159. D293 (proton acceptor) is an active-site residue. Phosphoenolpyruvate contacts are provided by R324, R365, and K391.

The protein belongs to the EPSP synthase family. Monomer.

The protein resides in the cytoplasm. The catalysed reaction is 3-phosphoshikimate + phosphoenolpyruvate = 5-O-(1-carboxyvinyl)-3-phosphoshikimate + phosphate. It participates in metabolic intermediate biosynthesis; chorismate biosynthesis. Functionally, catalyzes the transfer of the enolpyruvyl moiety of phosphoenolpyruvate (PEP) to the 5-hydroxyl of shikimate-3-phosphate (S3P) to produce enolpyruvyl shikimate-3-phosphate and inorganic phosphate. The chain is 3-phosphoshikimate 1-carboxyvinyltransferase from Thermoplasma volcanium (strain ATCC 51530 / DSM 4299 / JCM 9571 / NBRC 15438 / GSS1).